Consider the following 860-residue polypeptide: Leucine--tRNA ligase (860 aa).

Residues 42 to 52 (PYPSGRLHMGH) carry the 'HIGH' region motif. Residues 619 to 623 (KMSKS) carry the 'KMSKS' region motif. K622 provides a ligand contact to ATP.

This sequence belongs to the class-I aminoacyl-tRNA synthetase family.

It is found in the cytoplasm. The catalysed reaction is tRNA(Leu) + L-leucine + ATP = L-leucyl-tRNA(Leu) + AMP + diphosphate. This chain is Leucine--tRNA ligase, found in Salmonella choleraesuis (strain SC-B67).